A 385-amino-acid chain; its full sequence is Glucans biosynthesis protein C (385 aa).

10 helical membrane-spanning segments follow: residues 17-39, 54-76, 88-110, 136-158, 179-198, 213-235, 242-261, 276-295, 308-330, and 334-356; these read AWLM…TWHV, FIHS…MLFL, VERV…FIML, LISH…WIFK, LSVI…RTIF, IVMQ…IFPH, TPSR…YLLN, SVIT…SFGH, FVNA…GAYI, and ITSN…IILY.

Belongs to the acyltransferase 3 family. OpgC subfamily.

It localises to the cell membrane. It functions in the pathway glycan metabolism; osmoregulated periplasmic glucan (OPG) biosynthesis. Functionally, necessary for the succinyl substitution of periplasmic glucans. Could catalyze the transfer of succinyl residues from the cytoplasmic side of the membrane to the nascent glucan backbones on the periplasmic side of the membrane. In Escherichia coli O157:H7, this protein is Glucans biosynthesis protein C.